The chain runs to 105 residues: Late embryogenesis abundant protein Lea5-D (105 aa).

The segment at 48–67 is disordered; that stretch reads KVERRDAMKESSSSETRAYS. Residues 57 to 67 show a composition bias toward low complexity; it reads ESSSSETRAYS.

This sequence belongs to the LEA type 3 family.

This is Late embryogenesis abundant protein Lea5-D (LEA5-D) from Gossypium hirsutum (Upland cotton).